A 323-amino-acid chain; its full sequence is Protoheme IX farnesyltransferase (323 aa).

9 helical membrane-spanning segments follow: residues 28 to 48 (IIPL…NGQV), 50 to 70 (PVLL…AQTL), 99 to 119 (HALI…VVFV), 122 to 142 (ASAL…THML), 150 to 170 (IVIG…AVTG), 178 to 198 (ALFA…ALMI), 223 to 243 (IWIY…PLAA), 244 to 264 (SGIV…YKTW), and 279 to 299 (LFKY…VDSL).

Belongs to the UbiA prenyltransferase family. Protoheme IX farnesyltransferase subfamily.

The protein resides in the cell inner membrane. The enzyme catalyses heme b + (2E,6E)-farnesyl diphosphate + H2O = Fe(II)-heme o + diphosphate. It participates in porphyrin-containing compound metabolism; heme O biosynthesis; heme O from protoheme: step 1/1. In terms of biological role, converts heme B (protoheme IX) to heme O by substitution of the vinyl group on carbon 2 of heme B porphyrin ring with a hydroxyethyl farnesyl side group. The chain is Protoheme IX farnesyltransferase from Gloeothece citriformis (strain PCC 7424) (Cyanothece sp. (strain PCC 7424)).